Consider the following 311-residue polypeptide: Olfactory receptor-like protein OLF1 (311 aa).

The Extracellular segment spans residues 1-24 (MDGNYTLVTEFILLGFPTRPELQI). Asn-4 is a glycosylation site (N-linked (GlcNAc...) asparagine). Residues 25–48 (VLFLVFLTLYGIILTGNIGLMMLI) traverse the membrane as a helical segment. Residues 49–56 (RTDPHLQT) lie on the Cytoplasmic side of the membrane. A helical transmembrane segment spans residues 57-78 (PMYFFLSNLSFADLCFSSAIVP). The Extracellular segment spans residues 79-99 (KMLVNFLSENKSISLYGCALQ). A helical transmembrane segment spans residues 100–119 (FYFSCAFADTESFILAAMAY). Residues 120 to 138 (DRYVAICNPLLYTVVMSRG) lie on the Cytoplasmic side of the membrane. Residues 139–157 (ICVWLIVLSYIGGNMSSLV) form a helical membrane-spanning segment. The Extracellular segment spans residues 158-195 (HTSFAFILKYCDKNVINHFFCDLPPLLKLSCTDTSVNE). A helical membrane pass occupies residues 196–218 (WLLSTYGSSVEIFCFIVIVISYY). At 219–235 (FILRSVLRIRSSSGRKK) the chain is on the cytoplasmic side. Residues 236–259 (TFSTCASHLTSVAIYQGTLLFIYS) traverse the membrane as a helical segment. At 260–271 (RPTYLYTPNTDK) the chain is on the extracellular side. Residues 272 to 291 (IISVFYTIIIPVLNPLIYSL) traverse the membrane as a helical segment. Residues 292–311 (RNKDVKDAAKRAVRLKVDSS) are Cytoplasmic-facing.

The protein belongs to the G-protein coupled receptor 1 family.

It localises to the cell membrane. Its function is as follows. Putative odorant or sperm cell receptor. This chain is Olfactory receptor-like protein OLF1, found in Canis lupus familiaris (Dog).